Consider the following 406-residue polypeptide: Argininosuccinate synthase (406 aa).

Residues A10–S18 and A37 each bind ATP. Y88 and S93 together coordinate L-citrulline. G118 provides a ligand contact to ATP. Positions 120, 124, and 125 each coordinate L-aspartate. N124 serves as a coordination point for L-citrulline. Residues R128, S180, S189, E265, and Y277 each coordinate L-citrulline.

The protein belongs to the argininosuccinate synthase family. Type 1 subfamily. As to quaternary structure, homotetramer.

It is found in the cytoplasm. It catalyses the reaction L-citrulline + L-aspartate + ATP = 2-(N(omega)-L-arginino)succinate + AMP + diphosphate + H(+). The protein operates within amino-acid biosynthesis; L-arginine biosynthesis; L-arginine from L-ornithine and carbamoyl phosphate: step 2/3. This Methylobacillus flagellatus (strain ATCC 51484 / DSM 6875 / VKM B-1610 / KT) protein is Argininosuccinate synthase.